A 623-amino-acid polypeptide reads, in one-letter code: Laccase-1 (623 aa).

The signal sequence occupies residues 1 to 22 (MKTFTSALALVVGMLAPGAVVA). The propeptide occupies 23-50 (APPSTPAQRDLVELREARQEGGKDLRPR). C54 and C62 form a disulfide bridge. N89 and N138 each carry an N-linked (GlcNAc...) asparagine glycan. The Cu cation site is built by H143, H145, H188, and H190. Cystine bridges form between C164–C590 and C348–C382. N-linked (GlcNAc...) asparagine glycans are attached at residues N251, N266, N294, and N339. N-linked (GlcNAc...) asparagine glycans are attached at residues N426 and N446. Cu cation-binding residues include H481, H484, H486, H552, C553, H554, and H558. A propeptide spanning residues 610 to 623 (KRRRWVEESEWLVR) is cleaved from the precursor.

Belongs to the multicopper oxidase family. Monomer. It depends on Cu cation as a cofactor. Secreted protein; extracellular space.

It catalyses the reaction 4 hydroquinone + O2 = 4 benzosemiquinone + 2 H2O. Lignin degradation and detoxification of lignin-derived products. This Melanocarpus albomyces protein is Laccase-1 (LAC1).